The chain runs to 408 residues: D-inositol 3-phosphate glycosyltransferase (408 aa).

1D-myo-inositol 3-phosphate is bound at residue histidine 7. UDP-N-acetyl-alpha-D-glucosamine is bound by residues glutamine 13 to proline 14 and glycine 21. 1D-myo-inositol 3-phosphate-binding positions include aspartate 18–asparagine 23, lysine 76, tyrosine 109, threonine 133, and arginine 153. 3 residues coordinate UDP-N-acetyl-alpha-D-glucosamine: arginine 227, lysine 232, and valine 288. Residues phenylalanine 297, arginine 298, and alanine 300 each coordinate Mg(2+). UDP-N-acetyl-alpha-D-glucosamine contacts are provided by glutamate 310 and glutamate 318. Position 324 (threonine 324) interacts with Mg(2+).

This sequence belongs to the glycosyltransferase group 1 family. MshA subfamily. In terms of assembly, homodimer.

The enzyme catalyses 1D-myo-inositol 3-phosphate + UDP-N-acetyl-alpha-D-glucosamine = 1D-myo-inositol 2-acetamido-2-deoxy-alpha-D-glucopyranoside 3-phosphate + UDP + H(+). Its function is as follows. Catalyzes the transfer of a N-acetyl-glucosamine moiety to 1D-myo-inositol 3-phosphate to produce 1D-myo-inositol 2-acetamido-2-deoxy-glucopyranoside 3-phosphate in the mycothiol biosynthesis pathway. This Paenarthrobacter aurescens (strain TC1) protein is D-inositol 3-phosphate glycosyltransferase.